The primary structure comprises 185 residues: Large ribosomal subunit protein uL22 (185 aa).

The segment at Val157 to Asp185 is disordered. Residues Lys169 to Arg178 are compositionally biased toward basic residues.

This sequence belongs to the universal ribosomal protein uL22 family.

This chain is Large ribosomal subunit protein uL22 (RpL17), found in Argas monolakensis (Mono lake bird tick).